A 511-amino-acid chain; its full sequence is Adenosine deaminase 2 (511 aa).

The first 29 residues, 1–29, serve as a signal peptide directing secretion; sequence MLVDGPSERPALCFLLLAVAMSFFGSALS. The tract at residues 30–100 is dimerization; it reads IDETRAHLLL…HLIERSQVFN (71 aa). Zn(2+)-binding residues include H112 and H114. D115 provides a ligand contact to substrate. An N-linked (GlcNAc...) asparagine glycan is attached at N127. Residues 127-185 are PRB domain; that stretch reads NVTYRPHCHICFTPRGIMQFRFAHPTPRPSEKCSKWILLEDYRKRVQNVTEFDDSLLRN. C137 and C159 are disulfide-bonded. N174 and N185 each carry an N-linked (GlcNAc...) asparagine glycan. Substrate is bound by residues 204–211, H293, and G326; that span reads WSKFETIF. H356 serves as a coordination point for Zn(2+). The Proton donor role is filled by E359. N378 carries N-linked (GlcNAc...) asparagine glycosylation. Catalysis depends on H384, which acts as the Proton acceptor. D441 lines the Zn(2+) pocket. Substrate is bound at residue D442.

Belongs to the metallo-dependent hydrolases superfamily. Adenosine and AMP deaminases family. ADGF subfamily. In terms of assembly, homodimer. Interacts with adenosine receptors. Binds heparin. Zn(2+) serves as cofactor. In terms of tissue distribution, detected in blood plasma (at protein level). Widely expressed, with most abundant expression in human adult heart, lung, lymphoblasts, and placenta as well as fetal lung, liver, and kidney. In embryo, expressed in the outflow tract and atrium of the developing heart, the VII/VIII cranial nerve ganglion, and the notochord.

Its subcellular location is the secreted. The enzyme catalyses adenosine + H2O + H(+) = inosine + NH4(+). Functionally, adenosine deaminase that may contribute to the degradation of extracellular adenosine, a signaling molecule that controls a variety of cellular responses. Requires elevated adenosine levels for optimal enzyme activity. Binds to cell surfaces via proteoglycans and may play a role in the regulation of cell proliferation and differentiation, independently of its enzyme activity. In Homo sapiens (Human), this protein is Adenosine deaminase 2.